Consider the following 148-residue polypeptide: UPF0179 protein Mpal_0949 (148 aa).

This sequence belongs to the UPF0179 family.

The polypeptide is UPF0179 protein Mpal_0949 (Methanosphaerula palustris (strain ATCC BAA-1556 / DSM 19958 / E1-9c)).